The chain runs to 208 residues: dITP/XTP pyrophosphatase (208 aa).

Substrate is bound at residue 16-21 (TGNAGK). 2 residues coordinate Mg(2+): E46 and D75. The active-site Proton acceptor is D75. Substrate-binding positions include S76, 155–158 (FGYD), K178, and 183–184 (HR).

This sequence belongs to the HAM1 NTPase family. As to quaternary structure, homodimer. The cofactor is Mg(2+).

The catalysed reaction is XTP + H2O = XMP + diphosphate + H(+). It carries out the reaction dITP + H2O = dIMP + diphosphate + H(+). The enzyme catalyses ITP + H2O = IMP + diphosphate + H(+). Its function is as follows. Pyrophosphatase that catalyzes the hydrolysis of nucleoside triphosphates to their monophosphate derivatives, with a high preference for the non-canonical purine nucleotides XTP (xanthosine triphosphate), dITP (deoxyinosine triphosphate) and ITP. Seems to function as a house-cleaning enzyme that removes non-canonical purine nucleotides from the nucleotide pool, thus preventing their incorporation into DNA/RNA and avoiding chromosomal lesions. The sequence is that of dITP/XTP pyrophosphatase from Deinococcus deserti (strain DSM 17065 / CIP 109153 / LMG 22923 / VCD115).